Consider the following 122-residue polypeptide: MIQMQTTLDVADNTGARSVMCIKVLGGSRRRYAGIGDIIKVSIKDAAPRGRVKKGDVYNAVVVRTAKGVRRPDGSLVRFDGNAAVLLNNKLEPIGTRIFGPVTRELRTERFMKIVSLAPEVL.

Belongs to the universal ribosomal protein uL14 family. As to quaternary structure, part of the 50S ribosomal subunit. Forms a cluster with proteins L3 and L19. In the 70S ribosome, L14 and L19 interact and together make contacts with the 16S rRNA in bridges B5 and B8.

In terms of biological role, binds to 23S rRNA. Forms part of two intersubunit bridges in the 70S ribosome. This Dechloromonas aromatica (strain RCB) protein is Large ribosomal subunit protein uL14.